The chain runs to 285 residues: Elongation factor Ts (285 aa).

Residues 84–87 (TDFV) are involved in Mg(2+) ion dislocation from EF-Tu.

This sequence belongs to the EF-Ts family.

The protein resides in the cytoplasm. Its function is as follows. Associates with the EF-Tu.GDP complex and induces the exchange of GDP to GTP. It remains bound to the aminoacyl-tRNA.EF-Tu.GTP complex up to the GTP hydrolysis stage on the ribosome. The chain is Elongation factor Ts from Bifidobacterium animalis subsp. lactis (strain AD011).